A 196-amino-acid polypeptide reads, in one-letter code: Molybdenum cofactor guanylyltransferase (196 aa).

Residues 10–12 (LAG), K23, N51, D69, and D99 contribute to the GTP site. Position 99 (D99) interacts with Mg(2+).

It belongs to the MobA family. Monomer. Requires Mg(2+) as cofactor.

It localises to the cytoplasm. The catalysed reaction is Mo-molybdopterin + GTP + H(+) = Mo-molybdopterin guanine dinucleotide + diphosphate. Functionally, transfers a GMP moiety from GTP to Mo-molybdopterin (Mo-MPT) cofactor (Moco or molybdenum cofactor) to form Mo-molybdopterin guanine dinucleotide (Mo-MGD) cofactor. The chain is Molybdenum cofactor guanylyltransferase from Shewanella sp. (strain W3-18-1).